Reading from the N-terminus, the 324-residue chain is Holliday junction branch migration complex subunit RuvB (324 aa).

The interval 1 to 168 is large ATPase domain (RuvB-L); that stretch reads MEDLALRPKT…FGIVEHLEYY (168 aa). ATP contacts are provided by Y14, I15, G48, K51, T52, T53, D97, T146, Y168, and R205. T52 lines the Mg(2+) pocket. Residues 169–239 form a small ATPAse domain (RuvB-S) region; sequence TPEELAQGVM…RALEALAALG (71 aa). Positions 242-324 are head domain (RuvB-H); that stretch reads ELGLEKRDRE…PPPVGPLLEP (83 aa). Positions 297 and 302 each coordinate DNA.

The protein belongs to the RuvB family. In terms of assembly, homohexamer. Forms a complex with RuvA. Electron microscopic images suggest 2 closely interacting RuvA tetramers sandwich the HJ DNA; each tetramer associates with an RuvB hexamer. Forms 2 complexes with Holliday junction (HJ) DNA which probably have 1 and 2 RuvA tetramers per complex (called complex I and complex II). Forms an RuvA(8)-RuvB(12)-Holliday junction (HJ) complex. HJ DNA is sandwiched between 2 RuvA tetramers; dsDNA enters through RuvA and exits via RuvB. An RuvB hexamer assembles on each DNA strand where it exits the tetramer. Each RuvB hexamer is contacted by two RuvA subunits (via domain III) on 2 adjacent RuvB subunits; this complex drives branch migration. In the full resolvosome a probable DNA-RuvA(4)-RuvB(12)-RuvC(2) complex forms which resolves the HJ. It depends on Mg(2+) as a cofactor.

It localises to the cytoplasm. The enzyme catalyses ATP + H2O = ADP + phosphate + H(+). Its activity is regulated as follows. The activity of RuvB is enhanced by E.coli RuvA. The RuvA-RuvB-RuvC complex processes Holliday junction (HJ) DNA during genetic recombination and DNA repair, while the RuvA-RuvB complex plays an important role in the rescue of blocked DNA replication forks via replication fork reversal (RFR). RuvA specifically binds to HJ cruciform DNA, conferring on it an open structure. The RuvB hexamer acts as an ATP-dependent pump, pulling dsDNA into and through the RuvAB complex. RuvB forms 2 homohexamers on either side of HJ DNA bound by 1 or 2 RuvA tetramers; 4 subunits per hexamer contact DNA at a time. Coordinated motions by a converter formed by DNA-disengaged RuvB subunits stimulates ATP hydrolysis and nucleotide exchange. Immobilization of the converter enables RuvB to convert the ATP-contained energy into a lever motion, pulling 2 nucleotides of DNA out of the RuvA tetramer per ATP hydrolyzed, thus driving DNA branch migration. The RuvB motors rotate together with the DNA substrate, which together with the progressing nucleotide cycle form the mechanistic basis for DNA recombination by continuous HJ branch migration. Branch migration allows RuvC to scan DNA until it finds its consensus sequence, where it cleaves and resolves cruciform DNA. In terms of biological role, ruvB is a Mg(2+)-dependent, DNA-dependent ATPase with an equal preference for supercoiled and linear dsDNA; all (d)NTPs tested were efficiently hydrolyzed. Promotes Holliday junction (HJ) dissociation at 60 degrees Celsius in the presence of ATP but not ATP-gamma-S or ADP; (d)ATP, (d)CTP and dTTP also power dissociation in the absence of any RuvA. RuvA stimulates the ATPase of RuvB in the presence of dsDNA and HJ branch migration by RuvB. Excess RuvB stimulates some branch migration in vitro even in the presence of mutant RuvA. The protein is Holliday junction branch migration complex subunit RuvB of Thermus thermophilus (strain ATCC 27634 / DSM 579 / HB8).